Reading from the N-terminus, the 131-residue chain is MNLIQTLEKEQFDKLSAGRVIPEFGPGDTVIVNVKVVEGERSRVQAYEGVCIGRSGGGINESFTVRKISYGEGVERVFPLLSPMIDSIKVVRRGKVRRAKLYYLRNLRGKSARITEKKQDRPAKVVAGAAE.

It belongs to the bacterial ribosomal protein bL19 family.

Its function is as follows. This protein is located at the 30S-50S ribosomal subunit interface and may play a role in the structure and function of the aminoacyl-tRNA binding site. The protein is Large ribosomal subunit protein bL19 of Rhodopseudomonas palustris (strain BisA53).